We begin with the raw amino-acid sequence, 540 residues long: ADP,ATP carrier protein 2 (540 aa).

12 helical membrane passes run 23–43, 61–81, 93–113, 150–170, 185–205, 222–242, 292–312, 334–354, 361–381, 389–409, 455–475, and 477–497; these read FSKF…YALL, VIPF…TMIY, VFIS…TVIY, LYYV…FWGV, ALIN…SLWL, EVLL…LYLY, LLGI…FEVV, ITTL…GQTI, IGAL…FGAI, MIFG…LGGV, SGGS…AASL, and AITI…AWLG.

This sequence belongs to the ADP/ATP translocase tlc family.

Its subcellular location is the cell membrane. The polypeptide is ADP,ATP carrier protein 2 (tlcB) (Chlamydia trachomatis serovar D (strain ATCC VR-885 / DSM 19411 / UW-3/Cx)).